The following is a 277-amino-acid chain: Diaminopimelate epimerase (277 aa).

Residues N11 and N72 each coordinate substrate. C81 serves as the catalytic Proton donor. Residues 82–83, N189, and 207–208 contribute to the substrate site; these read GN and ER. Residue C217 is the Proton acceptor of the active site. 218–219 contributes to the substrate binding site; the sequence is GT.

This sequence belongs to the diaminopimelate epimerase family. As to quaternary structure, homodimer.

Its subcellular location is the cytoplasm. It catalyses the reaction (2S,6S)-2,6-diaminopimelate = meso-2,6-diaminopimelate. Its pathway is amino-acid biosynthesis; L-lysine biosynthesis via DAP pathway; DL-2,6-diaminopimelate from LL-2,6-diaminopimelate: step 1/1. Functionally, catalyzes the stereoinversion of LL-2,6-diaminopimelate (L,L-DAP) to meso-diaminopimelate (meso-DAP), a precursor of L-lysine and an essential component of the bacterial peptidoglycan. The polypeptide is Diaminopimelate epimerase (Hydrogenobaculum sp. (strain Y04AAS1)).